The following is a 384-amino-acid chain: Cytochrome b (384 aa).

Helical transmembrane passes span 32–52 (LGSL…FLAM), 76–98 (WLIR…IHIG), 113–133 (VWTV…LGYC), and 179–199 (FFTF…MHLM). Residues His-82 and His-96 each contribute to the heme b site. Residues His-183 and His-197 each contribute to the heme b site. His-202 is a binding site for a ubiquinone. The next 4 membrane-spanning stretches (helical) occupy residues 225 to 245 (FIFK…LFVF), 289 to 309 (LGGV…PITD), 321 to 341 (LSKF…KLGE), and 348 to 368 (FILM…ILVP).

Belongs to the cytochrome b family. In terms of assembly, fungal cytochrome b-c1 complex contains 10 subunits; 3 respiratory subunits, 2 core proteins and 5 low-molecular weight proteins. Cytochrome b-c1 complex is a homodimer. The cofactor is heme b.

It localises to the mitochondrion inner membrane. Its function is as follows. Component of the ubiquinol-cytochrome c reductase complex (complex III or cytochrome b-c1 complex) that is part of the mitochondrial respiratory chain. The b-c1 complex mediates electron transfer from ubiquinol to cytochrome c. Contributes to the generation of a proton gradient across the mitochondrial membrane that is then used for ATP synthesis. This chain is Cytochrome b (COB), found in Eremothecium gossypii (strain ATCC 10895 / CBS 109.51 / FGSC 9923 / NRRL Y-1056) (Yeast).